The following is a 211-amino-acid chain: Uracil phosphoribosyltransferase (211 aa).

Residues Arg-78, Arg-103, and 130–138 (DPMLATGGT) each bind 5-phospho-alpha-D-ribose 1-diphosphate. Uracil contacts are provided by residues Ile-196 and 201-203 (GDA). Position 202 (Asp-202) interacts with 5-phospho-alpha-D-ribose 1-diphosphate.

This sequence belongs to the UPRTase family. Mg(2+) is required as a cofactor.

It catalyses the reaction UMP + diphosphate = 5-phospho-alpha-D-ribose 1-diphosphate + uracil. Its pathway is pyrimidine metabolism; UMP biosynthesis via salvage pathway; UMP from uracil: step 1/1. Allosterically activated by GTP. In terms of biological role, catalyzes the conversion of uracil and 5-phospho-alpha-D-ribose 1-diphosphate (PRPP) to UMP and diphosphate. The protein is Uracil phosphoribosyltransferase of Beutenbergia cavernae (strain ATCC BAA-8 / DSM 12333 / CCUG 43141 / JCM 11478 / NBRC 16432 / NCIMB 13614 / HKI 0122).